The following is a 100-amino-acid chain: Urease subunit gamma (100 aa).

Belongs to the urease gamma subunit family. As to quaternary structure, heterotrimer of UreA (gamma), UreB (beta) and UreC (alpha) subunits. Three heterotrimers associate to form the active enzyme.

Its subcellular location is the cytoplasm. The enzyme catalyses urea + 2 H2O + H(+) = hydrogencarbonate + 2 NH4(+). It functions in the pathway nitrogen metabolism; urea degradation; CO(2) and NH(3) from urea (urease route): step 1/1. The chain is Urease subunit gamma from Thioalkalivibrio sulfidiphilus (strain HL-EbGR7).